We begin with the raw amino-acid sequence, 663 residues long: Transketolase 2 (663 aa).

Position 25 (His-25) interacts with substrate. Residues His-65 and 113–115 contribute to the thiamine diphosphate site; that span reads GPL. Position 154 (Asp-154) interacts with Mg(2+). Thiamine diphosphate is bound by residues Gly-155 and Asn-184. Asn-184 and Ile-186 together coordinate Mg(2+). His-259, Arg-356, and Ser-383 together coordinate substrate. Thiamine diphosphate is bound at residue His-259. Glu-410 (proton donor) is an active-site residue. A thiamine diphosphate-binding site is contributed by Phe-436. Residues His-460, Asp-468, and Arg-519 each contribute to the substrate site.

This sequence belongs to the transketolase family. As to quaternary structure, homodimer. It depends on Mg(2+) as a cofactor. The cofactor is Ca(2+). Mn(2+) serves as cofactor. Co(2+) is required as a cofactor. Requires thiamine diphosphate as cofactor.

It catalyses the reaction D-sedoheptulose 7-phosphate + D-glyceraldehyde 3-phosphate = aldehydo-D-ribose 5-phosphate + D-xylulose 5-phosphate. Its function is as follows. Catalyzes the transfer of a two-carbon ketol group from a ketose donor to an aldose acceptor, via a covalent intermediate with the cofactor thiamine pyrophosphate. The chain is Transketolase 2 (tkt2) from Aliivibrio fischeri (strain ATCC 700601 / ES114) (Vibrio fischeri).